We begin with the raw amino-acid sequence, 406 residues long: Multifunctional CCA protein (406 aa).

ATP is bound by residues Gly-8 and Arg-11. CTP contacts are provided by Gly-8 and Arg-11. Mg(2+) is bound by residues Asp-21 and Asp-23. Arg-91, Arg-138, and Arg-141 together coordinate ATP. CTP-binding residues include Arg-91, Arg-138, and Arg-141. The HD domain maps to 229–331 (TGIHQEMVSD…LELLGRCDAL (103 aa)).

Belongs to the tRNA nucleotidyltransferase/poly(A) polymerase family. Bacterial CCA-adding enzyme type 1 subfamily. In terms of assembly, monomer. Can also form homodimers and oligomers. Mg(2+) serves as cofactor. Requires Ni(2+) as cofactor.

The enzyme catalyses a tRNA precursor + 2 CTP + ATP = a tRNA with a 3' CCA end + 3 diphosphate. It carries out the reaction a tRNA with a 3' CCA end + 2 CTP + ATP = a tRNA with a 3' CCACCA end + 3 diphosphate. Catalyzes the addition and repair of the essential 3'-terminal CCA sequence in tRNAs without using a nucleic acid template. Adds these three nucleotides in the order of C, C, and A to the tRNA nucleotide-73, using CTP and ATP as substrates and producing inorganic pyrophosphate. tRNA 3'-terminal CCA addition is required both for tRNA processing and repair. Also involved in tRNA surveillance by mediating tandem CCA addition to generate a CCACCA at the 3' terminus of unstable tRNAs. While stable tRNAs receive only 3'-terminal CCA, unstable tRNAs are marked with CCACCA and rapidly degraded. This chain is Multifunctional CCA protein, found in Stenotrophomonas maltophilia (strain K279a).